We begin with the raw amino-acid sequence, 322 residues long: Acetyl-coenzyme A carboxylase carboxyl transferase subunit beta (322 aa).

Residues 24–293 (LWIKCPDTGQ…PAVEEIAASD (270 aa)) enclose the CoA carboxyltransferase N-terminal domain.

It belongs to the AccD/PCCB family. Acetyl-CoA carboxylase is a heterohexamer composed of biotin carboxyl carrier protein (AccB), biotin carboxylase (AccC) and two subunits each of ACCase subunit alpha (AccA) and ACCase subunit beta (AccD).

It is found in the cytoplasm. It carries out the reaction N(6)-carboxybiotinyl-L-lysyl-[protein] + acetyl-CoA = N(6)-biotinyl-L-lysyl-[protein] + malonyl-CoA. Its pathway is lipid metabolism; malonyl-CoA biosynthesis; malonyl-CoA from acetyl-CoA: step 1/1. In terms of biological role, component of the acetyl coenzyme A carboxylase (ACC) complex. Biotin carboxylase (BC) catalyzes the carboxylation of biotin on its carrier protein (BCCP) and then the CO(2) group is transferred by the transcarboxylase to acetyl-CoA to form malonyl-CoA. This Rhodopseudomonas palustris (strain BisB5) protein is Acetyl-coenzyme A carboxylase carboxyl transferase subunit beta.